The chain runs to 440 residues: NADH-quinone oxidoreductase subunit D 1 (440 aa).

Belongs to the complex I 49 kDa subunit family. As to quaternary structure, NDH-1 is composed of 14 different subunits. Subunits NuoB, C, D, E, F, and G constitute the peripheral sector of the complex.

It is found in the cell membrane. The catalysed reaction is a quinone + NADH + 5 H(+)(in) = a quinol + NAD(+) + 4 H(+)(out). NDH-1 shuttles electrons from NADH, via FMN and iron-sulfur (Fe-S) centers, to quinones in the respiratory chain. The immediate electron acceptor for the enzyme in this species is believed to be a menaquinone. Couples the redox reaction to proton translocation (for every two electrons transferred, four hydrogen ions are translocated across the cytoplasmic membrane), and thus conserves the redox energy in a proton gradient. This is NADH-quinone oxidoreductase subunit D 1 from Streptomyces griseus subsp. griseus (strain JCM 4626 / CBS 651.72 / NBRC 13350 / KCC S-0626 / ISP 5235).